A 377-amino-acid polypeptide reads, in one-letter code: Succinyl-diaminopimelate desuccinylase (377 aa).

A Zn(2+)-binding site is contributed by His-75. Residue Asp-77 is part of the active site. Residue Asp-106 coordinates Zn(2+). Catalysis depends on Glu-136, which acts as the Proton acceptor. The Zn(2+) site is built by Glu-137, Glu-165, and His-350.

The protein belongs to the peptidase M20A family. DapE subfamily. In terms of assembly, homodimer. It depends on Zn(2+) as a cofactor. Co(2+) is required as a cofactor.

It carries out the reaction N-succinyl-(2S,6S)-2,6-diaminopimelate + H2O = (2S,6S)-2,6-diaminopimelate + succinate. It functions in the pathway amino-acid biosynthesis; L-lysine biosynthesis via DAP pathway; LL-2,6-diaminopimelate from (S)-tetrahydrodipicolinate (succinylase route): step 3/3. In terms of biological role, catalyzes the hydrolysis of N-succinyl-L,L-diaminopimelic acid (SDAP), forming succinate and LL-2,6-diaminopimelate (DAP), an intermediate involved in the bacterial biosynthesis of lysine and meso-diaminopimelic acid, an essential component of bacterial cell walls. This chain is Succinyl-diaminopimelate desuccinylase, found in Sphingopyxis alaskensis (strain DSM 13593 / LMG 18877 / RB2256) (Sphingomonas alaskensis).